We begin with the raw amino-acid sequence, 577 residues long: Aspartate--tRNA(Asp/Asn) ligase (577 aa).

Residue Glu-171 coordinates L-aspartate. An aspartate region spans residues 195-198 (QLFK). Residue Arg-217 participates in L-aspartate binding. ATP is bound by residues 217–219 (RDE) and Gln-226. His-444 provides a ligand contact to L-aspartate. Position 474 (Glu-474) interacts with ATP. Arg-481 is an L-aspartate binding site. 526–529 (GFDR) contacts ATP.

It belongs to the class-II aminoacyl-tRNA synthetase family. Type 1 subfamily. In terms of assembly, homodimer.

The protein resides in the cytoplasm. The catalysed reaction is tRNA(Asx) + L-aspartate + ATP = L-aspartyl-tRNA(Asx) + AMP + diphosphate. In terms of biological role, aspartyl-tRNA synthetase with relaxed tRNA specificity since it is able to aspartylate not only its cognate tRNA(Asp) but also tRNA(Asn). Reaction proceeds in two steps: L-aspartate is first activated by ATP to form Asp-AMP and then transferred to the acceptor end of tRNA(Asp/Asn). The protein is Aspartate--tRNA(Asp/Asn) ligase of Helicobacter pylori (strain P12).